The chain runs to 282 residues: Putative sugar uptake protein lp_2594 (282 aa).

10 helical membrane passes run Ile-2–Gly-21, Met-31–Phe-48, Val-53–Leu-75, Met-90–Trp-112, Ile-119–Ala-136, Phe-146–Ser-163, Leu-176–Tyr-194, Thr-209–Ala-226, Asn-233–Phe-252, and Ile-262–Leu-281.

It belongs to the GRP transporter (TC 2.A.7.5) family.

The protein localises to the cell membrane. In Lactiplantibacillus plantarum (strain ATCC BAA-793 / NCIMB 8826 / WCFS1) (Lactobacillus plantarum), this protein is Putative sugar uptake protein lp_2594.